Here is a 176-residue protein sequence, read N- to C-terminus: NAD(P)H-quinone oxidoreductase subunit 6, chloroplastic (176 aa).

A run of 5 helical transmembrane segments spans residues isoleucine 10–threonine 30, threonine 32–leucine 52, alanine 61–methionine 81, isoleucine 92–isoleucine 112, and phenylalanine 152–alanine 172.

It belongs to the complex I subunit 6 family. NDH is composed of at least 16 different subunits, 5 of which are encoded in the nucleus.

It localises to the plastid. It is found in the chloroplast thylakoid membrane. It catalyses the reaction a plastoquinone + NADH + (n+1) H(+)(in) = a plastoquinol + NAD(+) + n H(+)(out). It carries out the reaction a plastoquinone + NADPH + (n+1) H(+)(in) = a plastoquinol + NADP(+) + n H(+)(out). Functionally, NDH shuttles electrons from NAD(P)H:plastoquinone, via FMN and iron-sulfur (Fe-S) centers, to quinones in the photosynthetic chain and possibly in a chloroplast respiratory chain. The immediate electron acceptor for the enzyme in this species is believed to be plastoquinone. Couples the redox reaction to proton translocation, and thus conserves the redox energy in a proton gradient. In Piper cenocladum (Ant piper), this protein is NAD(P)H-quinone oxidoreductase subunit 6, chloroplastic (ndhG).